We begin with the raw amino-acid sequence, 103 residues long: Large ribosomal subunit protein bL28 (103 aa).

It belongs to the bacterial ribosomal protein bL28 family.

The chain is Large ribosomal subunit protein bL28 from Anaplasma marginale (strain St. Maries).